The chain runs to 359 residues: Patr class I histocompatibility antigen, B-1 alpha chain (359 aa).

Residues 1–20 (APRTVLLLLSAALALTETWA) form the signal peptide. Positions 21–110 (GSHSMRYFYT…ALRYYNQSEA (90 aa)) are alpha-1. Topologically, residues 21 to 305 (GSHSMRYFYT…PSSQSTIPIV (285 aa)) are extracellular. Residue Asn106 is glycosylated (N-linked (GlcNAc...) asparagine). The alpha-2 stretch occupies residues 111-202 (GSHTWQTMYG…ENGKETLQRA (92 aa)). 2 disulfides stabilise this stretch: Cys121/Cys184 and Cys223/Cys279. An alpha-3 region spans residues 203–294 (DPPKTHVTHH…GLPKPLTLRW (92 aa)). In terms of domain architecture, Ig-like C1-type spans 205–291 (PKTHVTHHPI…QHEGLPKPLT (87 aa)). The connecting peptide stretch occupies residues 295 to 305 (EPSSQSTIPIV). A helical transmembrane segment spans residues 306–329 (GIVAGLAVLVVTVAVVAVVAAVMC). At 330–359 (RRKSSGGKGGSYSQAASSDSAQGSDVSLTA) the chain is on the cytoplasmic side. Residues 332–359 (KSSGGKGGSYSQAASSDSAQGSDVSLTA) are disordered. Residues 340-359 (SYSQAASSDSAQGSDVSLTA) show a composition bias toward low complexity. Phosphoserine is present on residues Ser353 and Ser356.

Belongs to the MHC class I family. As to quaternary structure, heterodimer of an alpha chain and a beta chain (beta-2-microglobulin).

Its subcellular location is the membrane. Involved in the presentation of foreign antigens to the immune system. In Pan troglodytes (Chimpanzee), this protein is Patr class I histocompatibility antigen, B-1 alpha chain.